The chain runs to 1368 residues: DNA-directed RNA polymerase subunit beta (1368 aa).

The protein belongs to the RNA polymerase beta chain family. As to quaternary structure, the RNAP catalytic core consists of 2 alpha, 1 beta, 1 beta' and 1 omega subunit. When a sigma factor is associated with the core the holoenzyme is formed, which can initiate transcription.

The catalysed reaction is RNA(n) + a ribonucleoside 5'-triphosphate = RNA(n+1) + diphosphate. DNA-dependent RNA polymerase catalyzes the transcription of DNA into RNA using the four ribonucleoside triphosphates as substrates. The polypeptide is DNA-directed RNA polymerase subunit beta (Paraburkholderia phymatum (strain DSM 17167 / CIP 108236 / LMG 21445 / STM815) (Burkholderia phymatum)).